The chain runs to 149 residues: Small ribosomal subunit protein uS19 (149 aa).

Belongs to the universal ribosomal protein uS19 family.

Protein S19 forms a complex with S13 that binds strongly to the 16S ribosomal RNA. The polypeptide is Small ribosomal subunit protein uS19 (Methanopyrus kandleri (strain AV19 / DSM 6324 / JCM 9639 / NBRC 100938)).